We begin with the raw amino-acid sequence, 557 residues long: Nicotinate phosphoribosyltransferase 2 (557 aa).

Residues tyrosine 31 and threonine 219 each contribute to the nicotinate site. Histidine 222 is subject to Phosphohistidine. Arginine 329 provides a ligand contact to nicotinate. Residue threonine 391 coordinates 5-phospho-alpha-D-ribose 1-diphosphate.

It belongs to the NAPRTase family. It depends on Mg(2+) as a cofactor. Mn(2+) serves as cofactor. Transiently phosphorylated on a His residue during the reaction cycle. Phosphorylation strongly increases the affinity for substrates and increases the rate of nicotinate D-ribonucleotide production. Dephosphorylation regenerates the low-affinity form of the enzyme, leading to product release.

It carries out the reaction nicotinate + 5-phospho-alpha-D-ribose 1-diphosphate + ATP + H2O = nicotinate beta-D-ribonucleotide + ADP + phosphate + diphosphate. It participates in cofactor biosynthesis; NAD(+) biosynthesis; nicotinate D-ribonucleotide from nicotinate: step 1/1. Functionally, catalyzes the first step in the biosynthesis of NAD from nicotinic acid, the ATP-dependent synthesis of beta-nicotinate D-ribonucleotide from nicotinate and 5-phospho-D-ribose 1-phosphate. Helps prevent cellular oxidative stress via its role in NAD biosynthesis. This Arabidopsis thaliana (Mouse-ear cress) protein is Nicotinate phosphoribosyltransferase 2.